Consider the following 101-residue polypeptide: NADH-quinone oxidoreductase subunit K (101 aa).

3 helical membrane-spanning segments follow: residues 4-24, 30-50, and 61-81; these read LAHY…GIFL, IIIL…FVAF, and IFVF…LAIL.

This sequence belongs to the complex I subunit 4L family. As to quaternary structure, NDH-1 is composed of 14 different subunits. Subunits NuoA, H, J, K, L, M, N constitute the membrane sector of the complex.

The protein resides in the cell inner membrane. It carries out the reaction a quinone + NADH + 5 H(+)(in) = a quinol + NAD(+) + 4 H(+)(out). NDH-1 shuttles electrons from NADH, via FMN and iron-sulfur (Fe-S) centers, to quinones in the respiratory chain. The immediate electron acceptor for the enzyme in this species is believed to be ubiquinone. Couples the redox reaction to proton translocation (for every two electrons transferred, four hydrogen ions are translocated across the cytoplasmic membrane), and thus conserves the redox energy in a proton gradient. In Burkholderia cenocepacia (strain HI2424), this protein is NADH-quinone oxidoreductase subunit K.